The following is a 242-amino-acid chain: MSKSRLTVFSFVRRFLLRLMVVLAVFWGGGIALFSVAPVPFSAVMVERQVSAWLHGNFRYVAHSDWVSMDQISPWMGLAVIAAEDQKFPEHWGFDVASIEKALAHNERNENRIRGASTISQQTAKNLFLWDGRSWVRKGLEAGLTLGIETVWSKKRILTVYLNIAEFGDGVFGVEAAAQRYFHKPASKLTRSEAALLAAVLPNPLRFKVSAPSGYVRSRQAWILRQMYQLGGEPFMQQHQLD.

The helical transmembrane segment at 19–39 (LMVVLAVFWGGGIALFSVAPV) threads the bilayer.

It belongs to the glycosyltransferase 51 family.

It localises to the cell inner membrane. It carries out the reaction [GlcNAc-(1-&gt;4)-Mur2Ac(oyl-L-Ala-gamma-D-Glu-L-Lys-D-Ala-D-Ala)](n)-di-trans,octa-cis-undecaprenyl diphosphate + beta-D-GlcNAc-(1-&gt;4)-Mur2Ac(oyl-L-Ala-gamma-D-Glu-L-Lys-D-Ala-D-Ala)-di-trans,octa-cis-undecaprenyl diphosphate = [GlcNAc-(1-&gt;4)-Mur2Ac(oyl-L-Ala-gamma-D-Glu-L-Lys-D-Ala-D-Ala)](n+1)-di-trans,octa-cis-undecaprenyl diphosphate + di-trans,octa-cis-undecaprenyl diphosphate + H(+). The protein operates within cell wall biogenesis; peptidoglycan biosynthesis. Peptidoglycan polymerase that catalyzes glycan chain elongation from lipid-linked precursors. This chain is Biosynthetic peptidoglycan transglycosylase, found in Shigella dysenteriae serotype 1 (strain Sd197).